A 307-amino-acid chain; its full sequence is Aspartate carbamoyltransferase catalytic subunit (307 aa).

Carbamoyl phosphate-binding residues include arginine 51 and threonine 52. An L-aspartate-binding site is contributed by lysine 80. Carbamoyl phosphate-binding residues include arginine 101, histidine 129, and glutamine 132. Residues arginine 162 and arginine 225 each coordinate L-aspartate. 2 residues coordinate carbamoyl phosphate: leucine 264 and proline 265.

This sequence belongs to the aspartate/ornithine carbamoyltransferase superfamily. ATCase family. In terms of assembly, heterododecamer (2C3:3R2) of six catalytic PyrB chains organized as two trimers (C3), and six regulatory PyrI chains organized as three dimers (R2).

The catalysed reaction is carbamoyl phosphate + L-aspartate = N-carbamoyl-L-aspartate + phosphate + H(+). It functions in the pathway pyrimidine metabolism; UMP biosynthesis via de novo pathway; (S)-dihydroorotate from bicarbonate: step 2/3. In terms of biological role, catalyzes the condensation of carbamoyl phosphate and aspartate to form carbamoyl aspartate and inorganic phosphate, the committed step in the de novo pyrimidine nucleotide biosynthesis pathway. The protein is Aspartate carbamoyltransferase catalytic subunit of Lachnoclostridium phytofermentans (strain ATCC 700394 / DSM 18823 / ISDg) (Clostridium phytofermentans).